A 129-amino-acid chain; its full sequence is Small ribosomal subunit protein uS11 (129 aa).

This sequence belongs to the universal ribosomal protein uS11 family. Part of the 30S ribosomal subunit. Interacts with proteins S7 and S18. Binds to IF-3.

Functionally, located on the platform of the 30S subunit, it bridges several disparate RNA helices of the 16S rRNA. Forms part of the Shine-Dalgarno cleft in the 70S ribosome. The sequence is that of Small ribosomal subunit protein uS11 from Yersinia pseudotuberculosis serotype O:1b (strain IP 31758).